The following is a 675-amino-acid chain: DNA ligase (675 aa).

Residues 36 to 40 (DAAYD), 85 to 86 (SL), and Glu-117 each bind NAD(+). Residue Lys-119 is the N6-AMP-lysine intermediate of the active site. Arg-140, Glu-177, Lys-294, and Lys-318 together coordinate NAD(+). Zn(2+) contacts are provided by Cys-412, Cys-415, Cys-430, and Cys-436. Residues 597–675 (AEDLPLSGNT…EAEFLELIGE (79 aa)) form the BRCT domain.

It belongs to the NAD-dependent DNA ligase family. LigA subfamily. Mg(2+) serves as cofactor. The cofactor is Mn(2+).

It carries out the reaction NAD(+) + (deoxyribonucleotide)n-3'-hydroxyl + 5'-phospho-(deoxyribonucleotide)m = (deoxyribonucleotide)n+m + AMP + beta-nicotinamide D-nucleotide.. In terms of biological role, DNA ligase that catalyzes the formation of phosphodiester linkages between 5'-phosphoryl and 3'-hydroxyl groups in double-stranded DNA using NAD as a coenzyme and as the energy source for the reaction. It is essential for DNA replication and repair of damaged DNA. In Thioalkalivibrio sulfidiphilus (strain HL-EbGR7), this protein is DNA ligase.